Consider the following 385-residue polypeptide: Non-structural maintenance of chromosomes element 4 homolog A (385 aa).

A disordered region spans residues 1–69 (MSGDSSGRGP…PSDSGDEMMD (69 aa)). Basic and acidic residues-rich tracts occupy residues 10 to 21 (PEGRGRGRDPHR) and 42 to 55 (SARE…RPSL). The span at 56–68 (EDTEPSDSGDEMM) shows a compositional bias: acidic residues. Thr345 carries the phosphothreonine modification. Ser377 is subject to Phosphoserine.

The protein belongs to the NSE4 family. As to quaternary structure, component of the SMC5-SMC6 complex which consists at least of SMC5, SMC6, NSMCE2, NSMCE1, NSMCE4A or EID3 and NSMCE3. NSMCE1, NSMCE4A or EID3 and NSMCE3 probably form a subcomplex that bridges the head domains of the SMC5:SMC6 heterodimer. Interacts with NSMCE3.

Its subcellular location is the nucleus. The protein localises to the chromosome. It localises to the telomere. Component of the SMC5-SMC6 complex, a complex involved in DNA double-strand breaks by homologous recombination. The complex may promote sister chromatid homologous recombination by recruiting the SMC1-SMC3 cohesin complex to double-strand breaks. The complex is required for telomere maintenance via recombination in ALT (alternative lengthening of telomeres) cell lines and mediates sumoylation of shelterin complex (telosome) components which is proposed to lead to shelterin complex disassembly in ALT-associated PML bodies (APBs). Is involved in positive regulation of response to DNA damage stimulus. This Homo sapiens (Human) protein is Non-structural maintenance of chromosomes element 4 homolog A (NSMCE4A).